The primary structure comprises 344 residues: Photosystem II protein D1 (344 aa).

Thr-2 is modified (N-acetylthreonine). Residue Thr-2 is modified to Phosphothreonine. 3 helical membrane passes run 29 to 46 (YIGW…TATS), 118 to 133 (HFFL…EWEL), and 142 to 156 (WIAV…AATA). His-118 contributes to the chlorophyll a binding site. Tyr-126 serves as a coordination point for pheophytin a. [CaMn4O5] cluster-binding residues include Asp-170 and Glu-189. Residues 197–218 (FHMLGVAGVFGGSLFSAMHGSL) form a helical membrane-spanning segment. His-198 contacts chlorophyll a. A quinone-binding positions include His-215 and 264–265 (SF). His-215 is a Fe cation binding site. Residue His-272 participates in Fe cation binding. Residues 274-288 (FLAAWPVIGIWFTAL) traverse the membrane as a helical segment. The [CaMn4O5] cluster site is built by His-332, Glu-333, Asp-342, and Ala-344.

Belongs to the reaction center PufL/M/PsbA/D family. PSII is composed of 1 copy each of membrane proteins PsbA, PsbB, PsbC, PsbD, PsbE, PsbF, PsbH, PsbI, PsbJ, PsbK, PsbL, PsbM, PsbT, PsbX, PsbY, PsbZ, Psb30/Ycf12, at least 3 peripheral proteins of the oxygen-evolving complex and a large number of cofactors. It forms dimeric complexes. The D1/D2 heterodimer binds P680, chlorophylls that are the primary electron donor of PSII, and subsequent electron acceptors. It shares a non-heme iron and each subunit binds pheophytin, quinone, additional chlorophylls, carotenoids and lipids. D1 provides most of the ligands for the Mn4-Ca-O5 cluster of the oxygen-evolving complex (OEC). There is also a Cl(-1) ion associated with D1 and D2, which is required for oxygen evolution. The PSII complex binds additional chlorophylls, carotenoids and specific lipids. is required as a cofactor. In terms of processing, tyr-161 forms a radical intermediate that is referred to as redox-active TyrZ, YZ or Y-Z.

The protein localises to the plastid. Its subcellular location is the chloroplast thylakoid membrane. The enzyme catalyses 2 a plastoquinone + 4 hnu + 2 H2O = 2 a plastoquinol + O2. Functionally, photosystem II (PSII) is a light-driven water:plastoquinone oxidoreductase that uses light energy to abstract electrons from H(2)O, generating O(2) and a proton gradient subsequently used for ATP formation. It consists of a core antenna complex that captures photons, and an electron transfer chain that converts photonic excitation into a charge separation. The D1/D2 (PsbA/PsbD) reaction center heterodimer binds P680, the primary electron donor of PSII as well as several subsequent electron acceptors. This Pleurastrum terricola (Filamentous green alga) protein is Photosystem II protein D1.